The chain runs to 349 residues: Flagellar P-ring protein (349 aa).

The signal sequence occupies residues 1–16 (MKYFFIIALLLSSLYS).

Belongs to the FlgI family. The basal body constitutes a major portion of the flagellar organelle and consists of four rings (L,P,S, and M) mounted on a central rod.

It localises to the periplasm. Its subcellular location is the bacterial flagellum basal body. Functionally, assembles around the rod to form the L-ring and probably protects the motor/basal body from shearing forces during rotation. This is Flagellar P-ring protein from Aliarcobacter butzleri (strain RM4018) (Arcobacter butzleri).